Reading from the N-terminus, the 57-residue chain is Ribosome modulation factor 2 (57 aa).

Residues 1–24 form a disordered region; sequence MKRQKRDKLGRAHSNGYQAGLGGK.

It belongs to the ribosome modulation factor family.

It localises to the cytoplasm. In terms of biological role, during stationary phase, converts 70S ribosomes to an inactive dimeric form (100S ribosomes). This chain is Ribosome modulation factor 2, found in Colwellia psychrerythraea (strain 34H / ATCC BAA-681) (Vibrio psychroerythus).